A 550-amino-acid polypeptide reads, in one-letter code: Metal transporter Nramp3 (550 aa).

Over residues 1-26 (MSGPMQRSSQPQFISSVERNNQSNGP) the composition is skewed to polar residues. A disordered region spans residues 1–30 (MSGPMQRSSQPQFISSVERNNQSNGPGTPL). The next 12 membrane-spanning stretches (helical) occupy residues 50–70 (LFSYIGPGFLVSIAYIDPGNF), 83–103 (ELLWIILIASCAALIIQSLAA), 127–147 (FILWILAELAVVACDIPEVIG), 158–178 (IPVWCGVLITGLSTLMLLLLQ), 185–205 (LEFLIAILVSLIATCFLVELG), 233–253 (ISLLGAMVMPHNLFLHSALVL), 276–296 (AFALTIAFLINISIISVSGAV), 333–353 (LFAVALLASGQSSTITGTYAG), 368–390 (WIRNLLTRSLAILPSLIVSIIGG), 397–417 (LIIIASMILSFELPFALVPLL), 435–455 (ISVITWGIGSFIVVINTYFLI), and 473–493 (VFSGIFGFLGMLIYMAAILYL). The interval 523–550 (GEGSLGHLPREDISSMQLPQQRTASDLD) is disordered. Polar residues predominate over residues 536-550 (SSMQLPQQRTASDLD).

It belongs to the NRAMP (TC 2.A.55) family.

The protein resides in the membrane. Functionally, probable metal transporter. The sequence is that of Metal transporter Nramp3 (NRAMP3) from Oryza sativa subsp. japonica (Rice).